The following is a 360-amino-acid chain: Mannose-1-phosphate guanylyltransferase catalytic subunit beta (360 aa).

Residues 2–222 (KALILVGGYG…QGFWMDIGQP (221 aa)) are substrate-binding domain. D110 lines the GDP-alpha-D-mannose pocket. D110 is a Mg(2+) binding site. K162 is a catalytic residue. D218 serves as a coordination point for GDP-alpha-D-mannose. D218 is a binding site for Mg(2+). The hexapeptide repeat domain stretch occupies residues 245–360 (CSGPGIVGNV…ESVPEPRIIM (116 aa)).

The protein belongs to the transferase hexapeptide repeat family. Component of the GMPPA-GMPPB mannose-1-phosphate guanylyltransferase complex composed of 4 GMPPA subunits and 8 GMPPB subunits; the complex is organized into three layers, a central layer made up of 2 GMPPA dimers sandwiched between two layers each made up of 2 GMPPB dimers. GMPPB catalytic activity is reduced when part of the complex and binding of GDP-alpha-D-Mannose by GMPPA induces allosteric feedback inhibition of GMPPB. It depends on Mg(2+) as a cofactor. As to expression, ubiquitously expressed, including in brain and skeletal muscle. In terms of tissue distribution, weakly expressed with highest expression in skeletal muscle, brain and gonads.

It is found in the cytoplasm. The enzyme catalyses alpha-D-mannose 1-phosphate + GTP + H(+) = GDP-alpha-D-mannose + diphosphate. It participates in nucleotide-sugar biosynthesis; GDP-alpha-D-mannose biosynthesis; GDP-alpha-D-mannose from alpha-D-mannose 1-phosphate (GTP route): step 1/1. Its activity is regulated as follows. Enzyme activity is reduced by incorporation into the GMPPA-GMPPB mannose-1-phosphate guanylyltransferase complex. Allosterically inhibited, when part of the GMPPA-GMPPB complex, by GDP-alpha-D-mannose binding to GMPPA. Functionally, catalytic subunit of the GMPPA-GMPPB mannose-1-phosphate guanylyltransferase complex. Catalyzes the formation of GDP-mannose, an essential precursor of glycan moieties of glycoproteins and glycolipids. Can catalyze the reverse reaction in vitro. Together with GMPPA regulates GDP-alpha-D-mannose levels. In Homo sapiens (Human), this protein is Mannose-1-phosphate guanylyltransferase catalytic subunit beta.